The following is a 162-amino-acid chain: D-aminoacyl-tRNA deacylase (162 aa).

The Gly-cisPro motif, important for rejection of L-amino acids signature appears at 143-144 (GP).

This sequence belongs to the DTD family. As to quaternary structure, homodimer.

The protein localises to the cytoplasm. The catalysed reaction is glycyl-tRNA(Ala) + H2O = tRNA(Ala) + glycine + H(+). The enzyme catalyses a D-aminoacyl-tRNA + H2O = a tRNA + a D-alpha-amino acid + H(+). An aminoacyl-tRNA editing enzyme that deacylates mischarged D-aminoacyl-tRNAs. Also deacylates mischarged glycyl-tRNA(Ala), protecting cells against glycine mischarging by AlaRS. Acts via tRNA-based rather than protein-based catalysis; rejects L-amino acids rather than detecting D-amino acids in the active site. By recycling D-aminoacyl-tRNA to D-amino acids and free tRNA molecules, this enzyme counteracts the toxicity associated with the formation of D-aminoacyl-tRNA entities in vivo and helps enforce protein L-homochirality. This is D-aminoacyl-tRNA deacylase from Nitratidesulfovibrio vulgaris (strain ATCC 29579 / DSM 644 / CCUG 34227 / NCIMB 8303 / VKM B-1760 / Hildenborough) (Desulfovibrio vulgaris).